The sequence spans 143 residues: D-aminoacyl-tRNA deacylase (143 aa).

Residues 135-136 carry the Gly-cisPro motif, important for rejection of L-amino acids motif; the sequence is GP.

This sequence belongs to the DTD family. Homodimer.

It localises to the cytoplasm. The enzyme catalyses glycyl-tRNA(Ala) + H2O = tRNA(Ala) + glycine + H(+). The catalysed reaction is a D-aminoacyl-tRNA + H2O = a tRNA + a D-alpha-amino acid + H(+). An aminoacyl-tRNA editing enzyme that deacylates mischarged D-aminoacyl-tRNAs. Also deacylates mischarged glycyl-tRNA(Ala), protecting cells against glycine mischarging by AlaRS. Acts via tRNA-based rather than protein-based catalysis; rejects L-amino acids rather than detecting D-amino acids in the active site. By recycling D-aminoacyl-tRNA to D-amino acids and free tRNA molecules, this enzyme counteracts the toxicity associated with the formation of D-aminoacyl-tRNA entities in vivo and helps enforce protein L-homochirality. The sequence is that of D-aminoacyl-tRNA deacylase from Mycobacterium bovis (strain BCG / Pasteur 1173P2).